A 445-amino-acid polypeptide reads, in one-letter code: Phosphoglucosamine mutase (445 aa).

Catalysis depends on Ser-102, which acts as the Phosphoserine intermediate. Mg(2+)-binding residues include Ser-102, Asp-241, Asp-243, and Asp-245. Position 102 is a phosphoserine (Ser-102).

The protein belongs to the phosphohexose mutase family. Mg(2+) is required as a cofactor. In terms of processing, activated by phosphorylation.

It catalyses the reaction alpha-D-glucosamine 1-phosphate = D-glucosamine 6-phosphate. Its function is as follows. Catalyzes the conversion of glucosamine-6-phosphate to glucosamine-1-phosphate. The sequence is that of Phosphoglucosamine mutase from Enterobacter sp. (strain 638).